We begin with the raw amino-acid sequence, 1065 residues long: Tubulin glycylase 3C (1065 aa).

6 disordered regions span residues 1 to 146 (MSSL…REDK), 158 to 182 (IREQ…TKSK), 301 to 326 (STQK…DIAK), 341 to 360 (EKKR…KEQL), 381 to 482 (FFVD…GNGS), and 708 to 755 (NKQK…EKQM). Positions 23-53 (QEGNQEDLNNQNDHNLNNNELDSLSSPPSDN) are enriched in low complexity. Residues 54–63 (YNEEEFEQED) show a composition bias toward acidic residues. Residues 73-92 (QNASQNNISQTQRISQTQLP) show a composition bias toward polar residues. The segment covering 122-146 (LMEKKKKEQEEKEKKELKLKKREDK) has biased composition (basic and acidic residues). Positions 166–179 (LESQTEQSDHSNVT) are enriched in polar residues. The segment covering 313-326 (EGDKEKDDKKDIAK) has biased composition (basic and acidic residues). Over residues 385 to 403 (VPEKKPKKEKKKNESKEDN) the composition is skewed to basic and acidic residues. A compositionally biased stretch (polar residues) spans 404–423 (IQITSPKLNSTKSLSSQITR). A compositionally biased stretch (basic and acidic residues) spans 424-450 (KTNDAKKVEKLPKIKDSNKENHSKERN). Over residues 451-479 (EDNEEGDDGEYECDEGDEGASDGEDEDDG) the composition is skewed to acidic residues. In terms of domain architecture, TTL spans 633 to 1009 (YFEKDPDIEK…DYGMEKSKKA (377 aa)). Residues 709–721 (KQKPKKKKKKSKK) show a composition bias toward basic residues. Residues 722–733 (DKQQGDTEKKEE) show a composition bias toward basic and acidic residues. Acidic residues predominate over residues 734–754 (EEGEAEDEEEDEEDEEEEEKQ). ATP is bound by residues 821-824 (QKYI), lysine 834, and aspartate 836.

Its subcellular location is the cell projection. It localises to the cilium. It is found in the cytoplasm. The protein resides in the cytoskeleton. The protein localises to the cilium axoneme. Functionally, probable glycylase which modifies tubulin, generating side chains of glycine on the gamma-carboxyl groups of specific glutamate residues within the C-terminal tail of tubulin. This chain is Tubulin glycylase 3C (TTLL3C), found in Tetrahymena thermophila (strain SB210).